The primary structure comprises 180 residues: Prorelaxin (180 aa).

Residues 1-25 (MLRLFLSHLLGVWLLLSLRARKIPA) form the signal peptide. Intrachain disulfides connect cysteine 33/cysteine 167, cysteine 45/cysteine 180, and cysteine 166/cysteine 171. A propeptide spans 53–154 (SSQQHREPRQ…RSRLDAHSRI (102 aa)) (connecting peptide).

Belongs to the insulin family. Heterodimer of a B chain and an A chain linked by two disulfide bonds. As to expression, expressed by the placenta. Exclusively detected in cells located in the lamellar placental labyrinth and absent from other placental and non-placental uterine parts.

It localises to the secreted. Its function is as follows. Relaxin is an ovarian hormone that acts with estrogen to produce dilatation of the birth canal in many mammals. This is Prorelaxin (RLN) from Felis catus (Cat).